Here is a 301-residue protein sequence, read N- to C-terminus: Protoheme IX farnesyltransferase (301 aa).

Transmembrane regions (helical) follow at residues 34–54, 55–75, 102–121, 125–144, 152–172, 181–201, 222–242, 247–267, and 280–300; these read LVVF…HPLI, GLVS…FNMW, AWEC…AIAV, SALL…TMLL, IVIG…SVSG, LFAI…LLTL, SHIL…GLFV, LYEI…IAVF, and GLFK…IACV.

Belongs to the UbiA prenyltransferase family. Protoheme IX farnesyltransferase subfamily.

Its subcellular location is the cell inner membrane. It catalyses the reaction heme b + (2E,6E)-farnesyl diphosphate + H2O = Fe(II)-heme o + diphosphate. It functions in the pathway porphyrin-containing compound metabolism; heme O biosynthesis; heme O from protoheme: step 1/1. In terms of biological role, converts heme B (protoheme IX) to heme O by substitution of the vinyl group on carbon 2 of heme B porphyrin ring with a hydroxyethyl farnesyl side group. In Anaplasma marginale (strain Florida), this protein is Protoheme IX farnesyltransferase.